An 83-amino-acid chain; its full sequence is DNA-directed RNA polymerase subunit Rpo5 (83 aa).

The protein belongs to the archaeal Rpo5/eukaryotic RPB5 RNA polymerase subunit family. In terms of assembly, part of the RNA polymerase complex.

Its subcellular location is the cytoplasm. The enzyme catalyses RNA(n) + a ribonucleoside 5'-triphosphate = RNA(n+1) + diphosphate. Functionally, DNA-dependent RNA polymerase (RNAP) catalyzes the transcription of DNA into RNA using the four ribonucleoside triphosphates as substrates. The protein is DNA-directed RNA polymerase subunit Rpo5 of Nitrosopumilus maritimus (strain SCM1).